The following is a 519-amino-acid chain: 2,3-bisphosphoglycerate-independent phosphoglycerate mutase (519 aa).

Residues Asp9 and Ser60 each contribute to the Mn(2+) site. Ser60 functions as the Phosphoserine intermediate in the catalytic mechanism. Residues 76-91 (DSARVSDSIARSRGEA) are compositionally biased toward basic and acidic residues. The tract at residues 76–102 (DSARVSDSIARSRGEAPPDDDAQDPPF) is disordered. Residues His134, 163–164 (RD), Arg195, Arg201, 267–270 (RSDR), and Lys341 contribute to the substrate site. 5 residues coordinate Mn(2+): Asp408, His412, Asp449, His450, and His466.

The protein belongs to the BPG-independent phosphoglycerate mutase family. The cofactor is Mn(2+).

The enzyme catalyses (2R)-2-phosphoglycerate = (2R)-3-phosphoglycerate. The protein operates within carbohydrate degradation; glycolysis; pyruvate from D-glyceraldehyde 3-phosphate: step 3/5. Functionally, catalyzes the interconversion of 2-phosphoglycerate and 3-phosphoglycerate. In Haloarcula marismortui (strain ATCC 43049 / DSM 3752 / JCM 8966 / VKM B-1809) (Halobacterium marismortui), this protein is 2,3-bisphosphoglycerate-independent phosphoglycerate mutase.